The sequence spans 55 residues: Variant surface glycoprotein ETAT 1.2 (55 aa).

Asn-34 carries N-linked (GlcNAc...) asparagine glycosylation. Asn-38 carries GPI-anchor amidated asparagine lipidation. Positions 39 to 55 (NSFAIKTSTLLLAVLLF) are cleaved as a propeptide — removed in mature form.

The protein localises to the cell membrane. In terms of biological role, VSG forms a coat on the surface of the parasite. The trypanosome evades the immune response of the host by expressing a series of antigenically distinct VSGs from an estimated 1000 VSG genes. The protein is Variant surface glycoprotein ETAT 1.2 of Trypanosoma brucei rhodesiense.